The following is a 239-amino-acid chain: Ribosomal RNA small subunit methyltransferase G (239 aa).

S-adenosyl-L-methionine contacts are provided by residues G78, F83, 129 to 130, and R148; that span reads AE.

This sequence belongs to the methyltransferase superfamily. RNA methyltransferase RsmG family.

Its subcellular location is the cytoplasm. Specifically methylates the N7 position of a guanine in 16S rRNA. The sequence is that of Ribosomal RNA small subunit methyltransferase G from Clostridium botulinum (strain Alaska E43 / Type E3).